Here is a 318-residue protein sequence, read N- to C-terminus: Transaldolase (318 aa).

The active-site Schiff-base intermediate with substrate is the Lys132.

It belongs to the transaldolase family. Type 1 subfamily. Homodimer.

The protein resides in the cytoplasm. The enzyme catalyses D-sedoheptulose 7-phosphate + D-glyceraldehyde 3-phosphate = D-erythrose 4-phosphate + beta-D-fructose 6-phosphate. It participates in carbohydrate degradation; pentose phosphate pathway; D-glyceraldehyde 3-phosphate and beta-D-fructose 6-phosphate from D-ribose 5-phosphate and D-xylulose 5-phosphate (non-oxidative stage): step 2/3. Its function is as follows. Transaldolase is important for the balance of metabolites in the pentose-phosphate pathway. The protein is Transaldolase of Hamiltonella defensa subsp. Acyrthosiphon pisum (strain 5AT).